Reading from the N-terminus, the 147-residue chain is Allograft inflammatory factor 1 (147 aa).

Serine 2 carries the N-acetylserine modification. Lysine 11 is subject to N6-acetyllysine. Serine 39 is modified (phosphoserine). The EF-hand 1 domain occupies 45 to 80; it reads SKLEAFKKKYMEFDLNEDGGIDIMSLKRMMEKLGVP. Ca(2+) is bound by residues aspartate 58, asparagine 60, and aspartate 62. One can recognise an EF-hand 2; degenerate domain in the interval 81 to 115; sequence KTHLELKKLIMEVSSGPGETFSYSDFLKMMLGKRS. A disordered region spans residues 128–147; it reads AREQEKPTGLPAKKAISELP.

In terms of processing, phosphorylated on serine residues.

It localises to the cytoplasm. It is found in the cytoskeleton. Its subcellular location is the cell projection. The protein localises to the ruffle membrane. The protein resides in the phagocytic cup. May play a role in macrophage activation and function. The sequence is that of Allograft inflammatory factor 1 (AIF1) from Bos taurus (Bovine).